The chain runs to 208 residues: Heat shock protein 26 (208 aa).

Residues Ser44, Ser52, and Ser58 each carry the phosphoserine modification. A sHSP domain is found at 71 to 179 (ANRNDIHWPA…KSKERIIQIQ (109 aa)). Positions 187–208 (NVKANESEVKGKENGAPNGKDK) are disordered. Residues 191-208 (NESEVKGKENGAPNGKDK) show a composition bias toward basic and acidic residues.

It belongs to the small heat shock protein (HSP20) family.

The chain is Heat shock protein 26 (Hsp26) from Drosophila melanogaster (Fruit fly).